A 231-amino-acid polypeptide reads, in one-letter code: Two-component response regulator ORR1 (231 aa).

A Response regulatory domain is found at 9-135; the sequence is RVLLVDDSPV…DVQRLRKCSP (127 aa). The residue at position 68 (D68) is a 4-aspartylphosphate.

Belongs to the ARR family. Type-A subfamily. Two-component system major event consists of a His-to-Asp phosphorelay between a sensor histidine kinase (HK) and a response regulator (RR). In plants, the His-to-Asp phosphorelay involves an additional intermediate named Histidine-containing phosphotransfer protein (HPt). This multistep phosphorelay consists of a His-Asp-His-Asp sequential transfer of a phosphate group between first a His and an Asp of the HK protein, followed by the transfer to a conserved His of the HPt protein and finally the transfer to an Asp in the receiver domain of the RR protein. As to expression, expressed in mature leaves and flowers, and at low levels in roots and shoots.

Its function is as follows. Functions as a response regulator involved in His-to-Asp phosphorelay signal transduction system. Phosphorylation of the Asp residue in the receiver domain activates the ability of the protein to promote the transcription of target genes. Type-A response regulators seem to act as negative regulators of the cytokinin signaling. The protein is Two-component response regulator ORR1 of Oryza sativa subsp. indica (Rice).